Consider the following 265-residue polypeptide: 5'-nucleotidase SurE (265 aa).

The a divalent metal cation site is built by D8, D9, S41, and N100.

This sequence belongs to the SurE nucleotidase family. Requires a divalent metal cation as cofactor.

The protein resides in the cytoplasm. It carries out the reaction a ribonucleoside 5'-phosphate + H2O = a ribonucleoside + phosphate. In terms of biological role, nucleotidase that shows phosphatase activity on nucleoside 5'-monophosphates. This chain is 5'-nucleotidase SurE, found in Brevibacillus brevis (strain 47 / JCM 6285 / NBRC 100599).